A 109-amino-acid polypeptide reads, in one-letter code: Period circadian protein (109 aa).

Positions 29–100 are disordered; it reads ITAPVDVDPH…TGTSSGSVQL (72 aa). Low complexity predominate over residues 69–97; it reads SGNFNSGSNLHIGSITNTSNTGTGTSSGS.

In terms of assembly, forms a heterodimer with timeless (TIM); the complex then translocates into the nucleus. Phosphorylated with a circadian rhythmicity, probably by the double-time protein (dbt). Phosphorylation could be implicated in the stability of per monomer and in the formation of heterodimer per-tim.

It localises to the nucleus. Its subcellular location is the cytoplasm. It is found in the perinuclear region. Its function is as follows. Essential for biological clock functions. Determines the period length of circadian and ultradian rhythms; an increase in PER dosage leads to shortened circadian rhythms and a decrease leads to lengthened circadian rhythms. Essential for the circadian rhythmicity of locomotor activity, eclosion behavior, and for the rhythmic component of the male courtship song that originates in the thoracic nervous system. The biological cycle depends on the rhythmic formation and nuclear localization of the TIM-PER complex. Light induces the degradation of TIM, which promotes elimination of PER. Nuclear activity of the heterodimer coordinatively regulates PER and TIM transcription through a negative feedback loop. Behaves as a negative element in circadian transcriptional loop. Does not appear to bind DNA, suggesting indirect transcriptional inhibition. The sequence is that of Period circadian protein (per) from Loxocera albiseta (Rust fly).